Consider the following 435-residue polypeptide: Eukaryotic translation initiation factor 3 subunit E (435 aa).

The PCI domain occupies 241 to 409; sequence TDMFFSPSYI…GTVIMNHPPQ (169 aa).

The protein belongs to the eIF-3 subunit E family. In terms of assembly, component of the eukaryotic translation initiation factor 3 (eIF-3) complex.

The protein localises to the cytoplasm. In terms of biological role, component of the eukaryotic translation initiation factor 3 (eIF-3) complex, which is involved in protein synthesis of a specialized repertoire of mRNAs and, together with other initiation factors, stimulates binding of mRNA and methionyl-tRNAi to the 40S ribosome. The eIF-3 complex specifically targets and initiates translation of a subset of mRNAs involved in cell proliferation. The polypeptide is Eukaryotic translation initiation factor 3 subunit E (Phaeosphaeria nodorum (strain SN15 / ATCC MYA-4574 / FGSC 10173) (Glume blotch fungus)).